The chain runs to 281 residues: MAKYVGAHVSASGGVENAPKNAQAIGAKAFALFTKNQRQWKAKPLSKENIEKFNEHLECCGIEKKHILPHDSYLINLGHPEEEKRQKSLEAFLDEVRRCEQLGLDKLNFHPGSHLKKISEEECLDRIADAMNETLRQSSGVTLVIENTAGQGSNLGYKFEHLRYLIDKSIDKSRVGVCLDTAHMFAAGYDIRTKEAYDKTMQAFDEIVGFEYLKGMHINDSKAKFASRVDRHHSLGKGEIGLDAFRFIMNDPRLDDIPLILETIDDTIWDKEIELLYSFVE.

Residues His-70, His-110, Glu-146, Asp-180, His-183, His-217, Asp-230, His-232, and Glu-262 each coordinate Zn(2+).

The protein belongs to the AP endonuclease 2 family. Requires Zn(2+) as cofactor.

It catalyses the reaction Endonucleolytic cleavage to 5'-phosphooligonucleotide end-products.. Its function is as follows. Endonuclease IV plays a role in DNA repair. It cleaves phosphodiester bonds at apurinic or apyrimidinic (AP) sites, generating a 3'-hydroxyl group and a 5'-terminal sugar phosphate. This is Probable endonuclease 4 from Nitratiruptor sp. (strain SB155-2).